The chain runs to 220 residues: Guanylate kinase (220 aa).

In terms of domain architecture, Guanylate kinase-like spans Gly-16–Arg-195. Ser-23–Thr-30 serves as a coordination point for ATP.

This sequence belongs to the guanylate kinase family.

It is found in the cytoplasm. The enzyme catalyses GMP + ATP = GDP + ADP. In terms of biological role, essential for recycling GMP and indirectly, cGMP. The sequence is that of Guanylate kinase from Rhodopseudomonas palustris (strain ATCC BAA-98 / CGA009).